Consider the following 433-residue polypeptide: GTPase Der (433 aa).

2 EngA-type G domains span residues 5-167 and 174-349; these read KKVL…GEVG and IKVG…DQLE. GTP is bound by residues 11–18, 58–62, 119–122, 180–187, 227–231, and 292–295; these read GRPNVGKS, DTGGF, NKVD, GKPNSGKS, DTAGI, and SKWD. A KH-like domain is found at 349-429; it reads ELKTSTPDLN…PILVELKEKI (81 aa).

This sequence belongs to the TRAFAC class TrmE-Era-EngA-EngB-Septin-like GTPase superfamily. EngA (Der) GTPase family. Associates with the 50S ribosomal subunit.

GTPase that plays an essential role in the late steps of ribosome biogenesis. The chain is GTPase Der from Borreliella burgdorferi (strain ATCC 35210 / DSM 4680 / CIP 102532 / B31) (Borrelia burgdorferi).